Reading from the N-terminus, the 166-residue chain is Putative peroxisomal peroxiredoxin (166 aa).

A Thioredoxin domain is found at 5-166; the sequence is FPEDVKFLYI…SGVDAVLAAL (162 aa). The active-site Cysteine sulfenic acid (-SOH) intermediate is C56.

This sequence belongs to the peroxiredoxin family. Prx5 subfamily. As to quaternary structure, homodimer; disulfide-linked, upon oxidation.

It carries out the reaction a hydroperoxide + [protein]-dithiol = [protein]-disulfide + an alcohol + H2O. Functionally, thiol-specific peroxidase that catalyzes the reduction of hydrogen peroxide and organic hydroperoxides to water and alcohols, respectively. Plays a role in cell protection against oxidative stress by detoxifying peroxides and as sensor of hydrogen peroxide-mediated signaling events. The protein is Putative peroxisomal peroxiredoxin of Lipomyces kononenkoae (Yeast).